A 435-amino-acid polypeptide reads, in one-letter code: Acetylcholine receptor-like protein cup-4 (435 aa).

A signal peptide spans 1–24 (MRLLLIFTVIFVFYLAILKRDVNA). Asparagine 41, asparagine 68, asparagine 237, and asparagine 249 each carry an N-linked (GlcNAc...) asparagine glycan. The next 2 helical transmembrane spans lie at 298 to 318 (VSFF…AIYL) and 341 to 361 (ITLF…HGVL). N-linked (GlcNAc...) asparagine glycosylation is present at asparagine 403. Residues 413 to 433 (PLAGLAMFVYFVIMFILYLVV) form a helical membrane-spanning segment.

This sequence belongs to the ligand-gated ion channel (TC 1.A.9) family. Acetylcholine receptor (TC 1.A.9.1) subfamily.

It localises to the cytoplasmic vesicle membrane. Its function is as follows. Thought to regulate endocytosis in coelomocytes through modulation of phospholipase C activity. Possible acetylcholine receptor. In Caenorhabditis briggsae, this protein is Acetylcholine receptor-like protein cup-4.